The following is a 117-amino-acid chain: Ig heavy chain V region RF (117 aa).

Residues 1–19 (MNFGLRLIFLVLVLKGVLC) form the signal peptide. Positions 20-49 (DVKLVESGGGLVKLGGSLKLSCAASGFTFS) are framework-1. The cysteines at positions 41 and 115 are disulfide-linked. Residues 50 to 54 (SYYMS) form a complementarity-determining-1 region. A framework-2 region spans residues 55–68 (WVRQTPEKRLELVA). Positions 69-85 (AINSNGGSTYYPDTVKG) are complementarity-determining-2. The tract at residues 86 to 117 (RFTISRDNAKNTLYLQMSSLKSEDTALYYCAR) is framework-3.

This Mus musculus (Mouse) protein is Ig heavy chain V region RF.